We begin with the raw amino-acid sequence, 369 residues long: tRNA/tmRNA (uracil-C(5))-methyltransferase (369 aa).

Residues Gln190, Tyr218, Asn223, Glu239, and Asp301 each contribute to the S-adenosyl-L-methionine site. Residue Cys326 is the Nucleophile of the active site. Glu360 serves as the catalytic Proton acceptor.

The protein belongs to the class I-like SAM-binding methyltransferase superfamily. RNA M5U methyltransferase family. TrmA subfamily.

It carries out the reaction uridine(54) in tRNA + S-adenosyl-L-methionine = 5-methyluridine(54) in tRNA + S-adenosyl-L-homocysteine + H(+). It catalyses the reaction uridine(341) in tmRNA + S-adenosyl-L-methionine = 5-methyluridine(341) in tmRNA + S-adenosyl-L-homocysteine + H(+). Dual-specificity methyltransferase that catalyzes the formation of 5-methyluridine at position 54 (m5U54) in all tRNAs, and that of position 341 (m5U341) in tmRNA (transfer-mRNA). This is tRNA/tmRNA (uracil-C(5))-methyltransferase from Vibrio cholerae serotype O1 (strain ATCC 39541 / Classical Ogawa 395 / O395).